A 421-amino-acid polypeptide reads, in one-letter code: Polygalacturonase (421 aa).

An N-terminal signal peptide occupies residues 1–20 (MKFSTAIIVSFLFIADFCAA). Residues N156 and N180 are each glycosylated (N-linked (GlcNAc...) asparagine). PbH1 repeat units lie at residues 178–204 (CKNI…HMGK) and 205–226 (STDV…SIGD). D219 acts as the Proton donor in catalysis. Residue H242 is part of the active site. 2 PbH1 repeats span residues 258–279 (VEGI…RIKT) and 289–310 (VSDI…IIDQ). The N-linked (GlcNAc...) asparagine glycan is linked to N265. Residues 394 to 421 (PGAPAASTTATPAASKTATPAAGKSPAK) are disordered.

The protein belongs to the glycosyl hydrolase 28 family. In terms of tissue distribution, pollen specific.

Its subcellular location is the secreted. It is found in the cell wall. The enzyme catalyses (1,4-alpha-D-galacturonosyl)n+m + H2O = (1,4-alpha-D-galacturonosyl)n + (1,4-alpha-D-galacturonosyl)m.. Functionally, may function in the depolymerization of the pectin in its walls during pollen tube elongation, or in that of the pistil during pollination. This chain is Polygalacturonase, found in Medicago sativa (Alfalfa).